The primary structure comprises 225 residues: Glutathione S-transferase Mu 3 (225 aa).

A GST N-terminal domain is found at 5–92 (SSMVLGYWDI…YIARKHNMCG (88 aa)). Residues 11-12 (YW), 50-54 (WLDVK), and 63-64 (NL) contribute to the glutathione site. Residue Lys54 forms a Glycyl lysine isopeptide (Lys-Gly) (interchain with G-Cter in SUMO2) linkage. Lys73 is covalently cross-linked (Glycyl lysine isopeptide (Lys-Gly) (interchain with G-Cter in SUMO2)). Glutathione is bound at residue 76–77 (QS). Residues 94 to 212 (TEEEKIRVDI…QSDQFFKMPI (119 aa)) enclose the GST C-terminal domain. Residue Tyr120 coordinates substrate.

Belongs to the GST superfamily. Mu family. As to quaternary structure, homodimer.

The protein resides in the cytoplasm. The catalysed reaction is RX + glutathione = an S-substituted glutathione + a halide anion + H(+). Its function is as follows. Conjugation of reduced glutathione to a wide number of exogenous and endogenous hydrophobic electrophiles. May govern uptake and detoxification of both endogenous compounds and xenobiotics at the testis and brain blood barriers. The sequence is that of Glutathione S-transferase Mu 3 (GSTM3) from Macaca fuscata fuscata (Japanese macaque).